Consider the following 226-residue polypeptide: ATP synthase subunit a (226 aa).

The next 6 membrane-spanning stretches (helical) occupy residues 22–42, 73–93, 102–122, 135–155, 173–193, and 202–222; these read SMNW…FWLI, IIIF…SLIP, LLLN…YLIY, LNSP…SLII, LILT…PINL, and LEIF…ILYF.

This sequence belongs to the ATPase A chain family. F-type ATPases have 2 components, CF(1) - the catalytic core - and CF(0) - the membrane proton channel. CF(1) has five subunits: alpha(3), beta(3), gamma(1), delta(1), epsilon(1). CF(0) has three main subunits: a, b and c.

The protein resides in the mitochondrion inner membrane. In terms of biological role, mitochondrial membrane ATP synthase (F(1)F(0) ATP synthase or Complex V) produces ATP from ADP in the presence of a proton gradient across the membrane which is generated by electron transport complexes of the respiratory chain. F-type ATPases consist of two structural domains, F(1) - containing the extramembraneous catalytic core and F(0) - containing the membrane proton channel, linked together by a central stalk and a peripheral stalk. During catalysis, ATP synthesis in the catalytic domain of F(1) is coupled via a rotary mechanism of the central stalk subunits to proton translocation. Key component of the proton channel; it may play a direct role in the translocation of protons across the membrane. The sequence is that of ATP synthase subunit a (ATP6) from Apis mellifera ligustica (Common honeybee).